The primary structure comprises 142 residues: Large ribosomal subunit protein uL13 (142 aa).

It belongs to the universal ribosomal protein uL13 family. As to quaternary structure, part of the 50S ribosomal subunit.

Functionally, this protein is one of the early assembly proteins of the 50S ribosomal subunit, although it is not seen to bind rRNA by itself. It is important during the early stages of 50S assembly. This is Large ribosomal subunit protein uL13 from Pseudomonas fluorescens (strain ATCC BAA-477 / NRRL B-23932 / Pf-5).